The following is a 157-amino-acid chain: DNA gyrase inhibitor (157 aa).

It belongs to the DNA gyrase inhibitor family. Interacts with DNA gyrase.

The protein resides in the cytoplasm. Functionally, inhibits the supercoiling activity of DNA gyrase. Acts by inhibiting DNA gyrase at an early step, prior to (or at the step of) binding of DNA by the gyrase. It protects cells against toxins that target DNA gyrase, by inhibiting activity of these toxins and reducing the formation of lethal double-strand breaks in the cell. In Enterobacter lignolyticus (strain SCF1), this protein is DNA gyrase inhibitor.